Consider the following 170-residue polypeptide: Ankyrin repeat-containing protein C105.02c (170 aa).

2 ANK repeats span residues 46–76 (LGND…NLNN) and 81–116 (TGDT…DPLL). A disordered region spans residues 150 to 170 (SADVVADDDDEEEGSGESDEE). A compositionally biased stretch (acidic residues) spans 154 to 170 (VADDDDEEEGSGESDEE).

It is found in the cytoplasm. It localises to the nucleus. The polypeptide is Ankyrin repeat-containing protein C105.02c (Schizosaccharomyces pombe (strain 972 / ATCC 24843) (Fission yeast)).